A 665-amino-acid chain; its full sequence is Methionine--tRNA ligase (665 aa).

The 'HIGH' region signature appears at 12 to 22 (YYPSGKLHIGS). A 'KMSKS' region motif is present at residues 308–312 (KMSKS). An ATP-binding site is contributed by K311. One can recognise a tRNA-binding domain in the interval 562–665 (TFDAVEIRVA…SSVPNGSIIG (104 aa)).

Belongs to the class-I aminoacyl-tRNA synthetase family. MetG type 2B subfamily. Homodimer.

Its subcellular location is the cytoplasm. It carries out the reaction tRNA(Met) + L-methionine + ATP = L-methionyl-tRNA(Met) + AMP + diphosphate. Is required not only for elongation of protein synthesis but also for the initiation of all mRNA translation through initiator tRNA(fMet) aminoacylation. This chain is Methionine--tRNA ligase (metG), found in Streptococcus pyogenes serotype M18 (strain MGAS8232).